The chain runs to 265 residues: Undecaprenyl-diphosphatase (265 aa).

8 consecutive transmembrane segments (helical) span residues 15–37, 41–61, 85–105, 109–129, 144–164, 183–203, 218–238, and 244–264; these read GLTE…LLEY, KAES…VFLY, YLLA…HSFI, LFGP…ILAV, VSPA…WPGF, LAAE…TGYD, FWAV…KGFI, and VTFR…LLFW.

The protein belongs to the UppP family.

The protein localises to the cell inner membrane. The catalysed reaction is di-trans,octa-cis-undecaprenyl diphosphate + H2O = di-trans,octa-cis-undecaprenyl phosphate + phosphate + H(+). Catalyzes the dephosphorylation of undecaprenyl diphosphate (UPP). Confers resistance to bacitracin. This chain is Undecaprenyl-diphosphatase, found in Oleidesulfovibrio alaskensis (strain ATCC BAA-1058 / DSM 17464 / G20) (Desulfovibrio alaskensis).